Here is a 329-residue protein sequence, read N- to C-terminus: Peroxidase 18 (329 aa).

Residues 1–29 (MALQFFSCKPKYTFLSSLLLLLLLSSSVA) form the signal peptide. 4 disulfides stabilise this stretch: cysteine 40/cysteine 116, cysteine 73/cysteine 78, cysteine 122/cysteine 325, and cysteine 201/cysteine 235. The active-site Proton acceptor is histidine 71. Ca(2+)-binding residues include aspartate 72, valine 75, glycine 77, aspartate 79, and serine 81. Asparagine 87 carries N-linked (GlcNAc...) asparagine glycosylation. Residue isoleucine 164 participates in substrate binding. Histidine 194 provides a ligand contact to heme b. A Ca(2+)-binding site is contributed by threonine 195. Ca(2+) contacts are provided by aspartate 249, threonine 252, and aspartate 257.

It belongs to the peroxidase family. Classical plant (class III) peroxidase subfamily. It depends on heme b as a cofactor. Requires Ca(2+) as cofactor.

The protein resides in the secreted. It carries out the reaction 2 a phenolic donor + H2O2 = 2 a phenolic radical donor + 2 H2O. In terms of biological role, removal of H(2)O(2), oxidation of toxic reductants, biosynthesis and degradation of lignin, suberization, auxin catabolism, response to environmental stresses such as wounding, pathogen attack and oxidative stress. These functions might be dependent on each isozyme/isoform in each plant tissue. The chain is Peroxidase 18 (PER18) from Arabidopsis thaliana (Mouse-ear cress).